A 760-amino-acid polypeptide reads, in one-letter code: Golgin subfamily A member 5 (760 aa).

The Cytoplasmic portion of the chain corresponds to 1–727 (MSWFVDLAGK…IFLRRYPMAR (727 aa)). Over residues 95–111 (VSSTTPLGSSSKASSNF) the composition is skewed to polar residues. Disordered stretches follow at residues 95 to 114 (VSSTTPLGSSSKASSNFVRP), 126 to 216 (DFLN…SQAD), and 432 to 456 (TEEKQRAEDLQQQAKSSRSAAEYTK). Positions 135 to 146 (QSEKKEVRRETV) are enriched in basic and acidic residues. Positions 148 to 166 (KAFSPTGVSAQSQMPTVSL) are enriched in polar residues. Residues 174–201 (PSVTPTPSSTQGLSRNSSLGSLSSSSHS) show a composition bias toward low complexity. Positions 249–668 (QGQEHVISNL…LQGGQNSASH (420 aa)) form a coiled coil. Positions 441-450 (LQQQAKSSRS) are enriched in polar residues. A helical; Anchor for type IV membrane protein membrane pass occupies residues 728–748 (VFVIIYMALLHLWVMIVLLTY). The Extracellular portion of the chain corresponds to 749-760 (TPEMHHSHPDGR).

Its subcellular location is the golgi apparatus membrane. Functionally, involved in maintaining Golgi structure. Stimulates the formation of Golgi stacks and ribbons. Involved in intra-Golgi retrograde transport. The protein is Golgin subfamily A member 5 (golga5) of Danio rerio (Zebrafish).